Reading from the N-terminus, the 307-residue chain is Acetyl-coenzyme A carboxylase carboxyl transferase subunit beta (307 aa).

The tract at residues 1–26 (MAMAEPQDPKKGDKKTAERRGGGWLS) is disordered. Residues 7–21 (QDPKKGDKKTAERRG) are compositionally biased toward basic and acidic residues. The region spanning 45-307 (LWVKCPDTGE…LMMGRKRQAA (263 aa)) is the CoA carboxyltransferase N-terminal domain.

It belongs to the AccD/PCCB family. As to quaternary structure, acetyl-CoA carboxylase is a heterohexamer composed of biotin carboxyl carrier protein (AccB), biotin carboxylase (AccC) and two subunits each of ACCase subunit alpha (AccA) and ACCase subunit beta (AccD).

Its subcellular location is the cytoplasm. The catalysed reaction is N(6)-carboxybiotinyl-L-lysyl-[protein] + acetyl-CoA = N(6)-biotinyl-L-lysyl-[protein] + malonyl-CoA. Its pathway is lipid metabolism; malonyl-CoA biosynthesis; malonyl-CoA from acetyl-CoA: step 1/1. Functionally, component of the acetyl coenzyme A carboxylase (ACC) complex. Biotin carboxylase (BC) catalyzes the carboxylation of biotin on its carrier protein (BCCP) and then the CO(2) group is transferred by the transcarboxylase to acetyl-CoA to form malonyl-CoA. The sequence is that of Acetyl-coenzyme A carboxylase carboxyl transferase subunit beta from Caulobacter vibrioides (strain ATCC 19089 / CIP 103742 / CB 15) (Caulobacter crescentus).